The chain runs to 82 residues: Protein ImpC (82 aa).

This sequence belongs to the DinI family.

Functionally, the imp operon is involved in UV protection and mutation, however the ImpC protein is not essential for these functions. In Salmonella typhimurium, this protein is Protein ImpC (impC).